The primary structure comprises 504 residues: Glycerol kinase (504 aa).

Thr14 is a binding site for ADP. Thr14, Thr15, and Ser16 together coordinate ATP. Thr14 contributes to the sn-glycerol 3-phosphate binding site. Arg18 provides a ligand contact to ADP. Positions 84, 85, and 136 each coordinate sn-glycerol 3-phosphate. The glycerol site is built by Arg84, Glu85, and Tyr136. Phosphohistidine; by HPr is present on His232. Asp246 contributes to the sn-glycerol 3-phosphate binding site. 2 residues coordinate glycerol: Asp246 and Gln247. 2 residues coordinate ADP: Thr268 and Gly311. Thr268, Gly311, Gln315, and Gly412 together coordinate ATP. The ADP site is built by Gly412 and Asn416.

The protein belongs to the FGGY kinase family. As to quaternary structure, homotetramer and homodimer (in equilibrium). In terms of processing, the phosphoenolpyruvate-dependent sugar phosphotransferase system (PTS), including enzyme I, and histidine-containing protein (HPr) are required for the phosphorylation, which leads to the activation of the enzyme.

It carries out the reaction glycerol + ATP = sn-glycerol 3-phosphate + ADP + H(+). It functions in the pathway polyol metabolism; glycerol degradation via glycerol kinase pathway; sn-glycerol 3-phosphate from glycerol: step 1/1. With respect to regulation, activated by phosphorylation and inhibited by fructose 1,6-bisphosphate (FBP). Key enzyme in the regulation of glycerol uptake and metabolism. Catalyzes the phosphorylation of glycerol to yield sn-glycerol 3-phosphate. This chain is Glycerol kinase, found in Streptococcus pyogenes serotype M6 (strain ATCC BAA-946 / MGAS10394).